A 103-amino-acid polypeptide reads, in one-letter code: Cystatin-A (103 aa).

Met-1 carries the post-translational modification N-acetylmethionine. The short motif at 52 to 56 (QVVAG) is the Secondary area of contact element.

It belongs to the cystatin family.

It localises to the cytoplasm. This is an intracellular thiol proteinase inhibitor. The sequence is that of Cystatin-A (Csta) from Rattus norvegicus (Rat).